Here is a 376-residue protein sequence, read N- to C-terminus: MKDLNPEMGKFATTKGPPQDNRGMVDIATLPNFPANRSGTPREEMYLAPNKMETPRILNMNMVPDYLQKENFSPDFSSATVSAKSSPVNVTHDESLPLGTIESNSTKDSKYAVQRQQQQVVDFIENNMQLLSSETLNFRSDIMKTLELPIPKRRDIKGNHLSKLLFAKSPLTINTYCQFYDRRTKRICNQEMIWKDKNSREKHGSRKYQRHLSKVHDVQLTPNNFTEFFDHNSPLFQECYDYQSRLMRDLLVEPDAKFKEKKKKKKGDVNGNHPETGSSLINHQVQQQNVRELQSKIAMNDLIEILIDLNIPFSVLDYQPMRNWLIKYSIISTDTLPDEVYFKTDPGVNELEHNSSNLNNSNSGTPHNHNQNQHTN.

Disordered regions lie at residues 1-23, 88-107, 258-279, and 347-376; these read MKDL…DNRG, VNVT…NSTK, FKEK…TGSS, and GVNE…QHTN. The span at 354–376 shows a compositional bias: low complexity; that stretch reads NSSNLNNSNSGTPHNHNQNQHTN.

The protein localises to the cytoplasm. It localises to the nucleus. Its subcellular location is the mitochondrion. Its function is as follows. Mitochondrial and nuclear transcriptional activator required for respiratory growth. This is Respiration factor 1 (RSF1) from Saccharomyces cerevisiae (strain YJM789) (Baker's yeast).